We begin with the raw amino-acid sequence, 113 residues long: 2Fe-2S ferredoxin (113 aa).

Residues 2–104 (PKVIFLPNED…DLVVEIPKYN (103 aa)) form the 2Fe-2S ferredoxin-type domain. [2Fe-2S] cluster contacts are provided by cysteine 42, cysteine 48, cysteine 51, and cysteine 87.

It belongs to the adrenodoxin/putidaredoxin family. [2Fe-2S] cluster is required as a cofactor.

Ferredoxin are iron-sulfur proteins that transfer electrons in a wide variety of metabolic reactions. The chain is 2Fe-2S ferredoxin (fdx) from Haemophilus influenzae (strain ATCC 51907 / DSM 11121 / KW20 / Rd).